The chain runs to 147 residues: Immunity protein YxxD (147 aa).

In terms of assembly, probably interacts with cognate toxin YxiD but not with other non-cognate toxins. The interaction inhibits the toxic activity of YxiD.

The protein resides in the cytoplasm. Functionally, immunity component of one of 6 LXG toxin-immunity modules in this strain. They promote kin selection, mediate competition in biofilms, and drive spatial segregation of different strains, indicating that LXG toxins may help avoid warfare between strains in biofilms. Mediates intercellular competition during biofilm formation; disruption of the operon disadvantages the bacteria, but overexpression of the cognate immunity protein restores growth in competition with wild-type. In situ neutralizes the toxic effect of cognate toxin YxiD. Neutralizes the toxic activity of cognate toxin YxiD upon expression in E.coli. Does not have immunity protein activity on other LXG toxins. The protein is Immunity protein YxxD (yxxD) of Bacillus subtilis (strain 168).